The primary structure comprises 563 residues: Lipoprotein LpqB (563 aa).

A signal peptide spans 1–19 (MRRMKALTAAMTAALLVSG). A lipid anchor (N-palmitoyl cysteine) is attached at Cys-20. A lipid anchor (S-diacylglycerol cysteine) is attached at Cys-20.

This sequence belongs to the LpqB lipoprotein family.

The protein resides in the cell membrane. This chain is Lipoprotein LpqB, found in Corynebacterium efficiens (strain DSM 44549 / YS-314 / AJ 12310 / JCM 11189 / NBRC 100395).